The primary structure comprises 408 residues: UV excision repair protein RAD23 homolog B (408 aa).

The 79-residue stretch at 1 to 79 (MLVTLKTLQQ…VVVMVTKPKA (79 aa)) folds into the Ubiquitin-like domain. Low complexity predominate over residues 80 to 111 (VTTPAPATTQQSNSAATTTVSSSTAPAVTQAP). Residues 80–176 (VTTPAPATTQ…TSGDSSRSNL (97 aa)) are disordered. The span at 112-122 (APAPASAPTPT) shows a compositional bias: pro residues. Residues 123 to 143 (PVSVTPAPTTASSEPAPASAA) are compositionally biased toward low complexity. Basic and acidic residues predominate over residues 144–153 (KQEKPAERPV). Positions 154 to 174 (ETPVATTPTSTDSTSGDSSRS) are enriched in low complexity. Phosphothreonine is present on residues T155 and T164. S174 is subject to Phosphoserine. T186 bears the Phosphothreonine mark. The region spanning 188–228 (QSYENMVTEIMSMGYEREQVIAALRASFNNPDRAVEYLLMG) is the UBA 1 domain. Position 199 is a phosphoserine (S199). Y202 carries the phosphotyrosine modification. The interval 236-274 (QAVVDPPPAASTGAPQSSVAAAAATTTATTTTTSSGGHP) is disordered. Over residues 255-268 (AAAAATTTATTTTT) the composition is skewed to low complexity. Residues 273–316 (HPLEFLRNQPQFQQMRQIIQQNPSLLPALLQQIGRENPQLLQQI) form the STI1 domain. Residues 363–403 (PQEKEAIERLKALGFPEGLVIQAYFACEKNENLAANFLLQQ) enclose the UBA 2 domain.

The protein belongs to the RAD23 family. In terms of assembly, component of the XPC complex composed of XPC, RAD23B and CETN2. Interacts with NGLY1 and PSMC1. Interacts with ATXN3. Interacts with PSMD4 and PSMC5. Interacts with AMFR. Interacts with VCP; the interaction is indirect and mediated by NGLY1.

Its subcellular location is the nucleus. It is found in the cytoplasm. Multiubiquitin chain receptor involved in modulation of proteasomal degradation. Binds to polyubiquitin chains. Proposed to be capable to bind simultaneously to the 26S proteasome and to polyubiquitinated substrates and to deliver ubiquitinated proteins to the proteasome. May play a role in endoplasmic reticulum-associated degradation (ERAD) of misfolded glycoproteins by association with PNGase and delivering deglycosylated proteins to the proteasome. Functionally, involved in global genome nucleotide excision repair (GG-NER) by acting as component of the XPC complex. Cooperatively with CETN2 appears to stabilize XPC. May protect XPC from proteasomal degradation. Its function is as follows. The XPC complex is proposed to represent the first factor bound at the sites of DNA damage and together with other core recognition factors, XPA, RPA and the TFIIH complex, is part of the pre-incision (or initial recognition) complex. The XPC complex recognizes a wide spectrum of damaged DNA characterized by distortions of the DNA helix such as single-stranded loops, mismatched bubbles or single-stranded overhangs. The orientation of XPC complex binding appears to be crucial for inducing a productive NER. XPC complex is proposed to recognize and to interact with unpaired bases on the undamaged DNA strand which is followed by recruitment of the TFIIH complex and subsequent scanning for lesions in the opposite strand in a 5'-to-3' direction by the NER machinery. Cyclobutane pyrimidine dimers (CPDs) which are formed upon UV-induced DNA damage esacpe detection by the XPC complex due to a low degree of structural perurbation. Instead they are detected by the UV-DDB complex which in turn recruits and cooperates with the XPC complex in the respective DNA repair. In vitro, the XPC:RAD23B dimer is sufficient to initiate NER; it preferentially binds to cisplatin and UV-damaged double-stranded DNA and also binds to a variety of chemically and structurally diverse DNA adducts. XPC:RAD23B contacts DNA both 5' and 3' of a cisplatin lesion with a preference for the 5' side. XPC:RAD23B induces a bend in DNA upon binding. XPC:RAD23B stimulates the activity of DNA glycosylases TDG and SMUG1. The polypeptide is UV excision repair protein RAD23 homolog B (RAD23B) (Bos taurus (Bovine)).